Here is a 124-residue protein sequence, read N- to C-terminus: Fluoride-specific ion channel FluC (124 aa).

The next 3 helical transmembrane spans lie at 36–56 (VGTM…VVVL), 63–83 (YAPF…AFSL), and 99–119 (AYVG…MAAV). Positions 73 and 76 each coordinate Na(+).

The protein belongs to the fluoride channel Fluc/FEX (TC 1.A.43) family.

Its subcellular location is the cell inner membrane. It catalyses the reaction fluoride(in) = fluoride(out). With respect to regulation, na(+) is not transported, but it plays an essential structural role and its presence is essential for fluoride channel function. Fluoride-specific ion channel. Important for reducing fluoride concentration in the cell, thus reducing its toxicity. In Cereibacter sphaeroides (strain ATCC 17029 / ATH 2.4.9) (Rhodobacter sphaeroides), this protein is Fluoride-specific ion channel FluC.